We begin with the raw amino-acid sequence, 750 residues long: Polyribonucleotide nucleotidyltransferase (750 aa).

2 residues coordinate Mg(2+): Asp492 and Asp498. The KH domain occupies 559 to 618; it reads PQLSVVEVNPEIIRVIIGPGGKNIKAITSATGASIDIEDSGRISIFAPTKESMDMAREMV. Positions 628 to 695 constitute an S1 motif domain; that stretch reads GKNYTAKVRK…NDGRVRASRK (68 aa). The interval 705-750 is disordered; that stretch reads EWDPADTARPPRKPRDRDDRGDRGGRGDRGDRGGRNGRGGDRRDRR. Residues 717–750 are compositionally biased toward basic and acidic residues; it reads KPRDRDDRGDRGGRGDRGDRGGRNGRGGDRRDRR.

It belongs to the polyribonucleotide nucleotidyltransferase family. It depends on Mg(2+) as a cofactor.

Its subcellular location is the cytoplasm. It catalyses the reaction RNA(n+1) + phosphate = RNA(n) + a ribonucleoside 5'-diphosphate. Involved in mRNA degradation. Catalyzes the phosphorolysis of single-stranded polyribonucleotides processively in the 3'- to 5'-direction. The sequence is that of Polyribonucleotide nucleotidyltransferase from Oleidesulfovibrio alaskensis (strain ATCC BAA-1058 / DSM 17464 / G20) (Desulfovibrio alaskensis).